Consider the following 483-residue polypeptide: Betaine aldehyde dehydrogenase (483 aa).

The K(+) site is built by isoleucine 27 and aspartate 93. 149–151 lines the NAD(+) pocket; it reads GAW. Lysine 161 acts as the Charge relay system in catalysis. 175 to 178 is a binding site for NAD(+); that stretch reads KPSE. Residue valine 179 participates in K(+) binding. Residue 228 to 231 coordinates NAD(+); the sequence is SVPT. Residue valine 243 participates in K(+) binding. The active-site Proton acceptor is the glutamate 249. NAD(+) is bound by residues glycine 251, cysteine 283, and glutamate 380. The active-site Nucleophile is cysteine 283. Cysteine 283 is subject to Cysteine sulfenic acid (-SOH). 2 residues coordinate K(+): lysine 450 and glycine 453. Residue glutamate 457 is the Charge relay system of the active site.

Belongs to the aldehyde dehydrogenase family. As to quaternary structure, dimer of dimers. It depends on K(+) as a cofactor.

The catalysed reaction is betaine aldehyde + NAD(+) + H2O = glycine betaine + NADH + 2 H(+). It participates in amine and polyamine biosynthesis; betaine biosynthesis via choline pathway; betaine from betaine aldehyde: step 1/1. In terms of biological role, involved in the biosynthesis of the osmoprotectant glycine betaine. Catalyzes the irreversible oxidation of betaine aldehyde to the corresponding acid. The polypeptide is Betaine aldehyde dehydrogenase (Cereibacter sphaeroides (strain ATCC 17023 / DSM 158 / JCM 6121 / CCUG 31486 / LMG 2827 / NBRC 12203 / NCIMB 8253 / ATH 2.4.1.) (Rhodobacter sphaeroides)).